Consider the following 1238-residue polypeptide: DNA-directed RNA polymerase subunit beta (1238 aa).

The disordered stretch occupies residues 1187 to 1238; that stretch reads EGREDTPPEEVYEESYEEGFEEEIEELPEDIDFEPDSFDIENDDLDLEDFDI. Residues 1193–1238 are compositionally biased toward acidic residues; that stretch reads PPEEVYEESYEEGFEEEIEELPEDIDFEPDSFDIENDDLDLEDFDI.

The protein belongs to the RNA polymerase beta chain family. In terms of assembly, the RNAP catalytic core consists of 2 alpha, 1 beta, 1 beta' and 1 omega subunit. When a sigma factor is associated with the core the holoenzyme is formed, which can initiate transcription.

The catalysed reaction is RNA(n) + a ribonucleoside 5'-triphosphate = RNA(n+1) + diphosphate. Functionally, DNA-dependent RNA polymerase catalyzes the transcription of DNA into RNA using the four ribonucleoside triphosphates as substrates. The sequence is that of DNA-directed RNA polymerase subunit beta from Thermoanaerobacter pseudethanolicus (strain ATCC 33223 / 39E) (Clostridium thermohydrosulfuricum).